The chain runs to 1233 residues: MSFFNFRKIFKLGSEKKKKQYEHVKRDLNPEEFWEIIGELGDGAFGKVYKAQNKETNVLAAAKVIDTKSEEELEDYMVEIDILASCDHPNIVKLLDAFYYENNLWILIEFCAGGAVDAVMLELERPLTESQIQVVCKQTLEALNYLHDNKIIHRDLKAGNILFTLDGDIKLADFGVSAKNTRTIQRRDSFIGTPYWMAPEVVMCETSKDRPYDYKADVWSLGITLIEMAEIEPPHHELNPMRVLLKIAKSEPPTLAQPSKWSSNFKDFLRKCLEKNVDARWTTSQLLQHPFVTVDSNKPVRELIAEAKAEVTEEVEDGKEEDEEEEAENALPIPANKRASSDLSIASSEEDKLSQNACILESVSERTEQSTSEDKFSNKILNEKPTTDGPEKAVDEHASDVNLETGAELNDQTVGIHENGREKKRPKLENLPDTQDQQTVDVNSVSEENENNRVTLETNTDCLKPEEDRNKENQETLESKLIQSEEINDTHIQTMDLVSQETGEKEADFQAVDNEVGLTKEETQEKLGKDGTAQKVITSDRSSEVGTDEALDDTQKAAELSKAAQSGEGDEALAPTQTLAEKPTEGPEAGGAEEEPPGGERVEDKQPEQQPAVCEAEGQLTSTSETTRATLEQPETDEVEQVSESNSIEELERLVVTGAEARALGSEGEAAATEVDLERKENAQKVPVKAESQAPAASQPSEPHPVLIPSININSETTENKEEMGALPKPETILPPEPEHEKGNDTDSGTGSTVENSSGDLNLSISSFLSKAKDSGSVSLQETRRQKKTLKKTRKFIVDGVEVSVTTSKIVTDSDSKTEELRFLRRQELRELRLLQKEEQRAQQQLNGKLQQQREQIFRRFEQEMLSKKRQYDQEIENLEKQQKQTIERLEQEHTNRLRDEAKRIKGEQEKELSKFQNVLKNRKKEVMNEVEKAPRELRRELTKRRKEELAQSQHAQEQEFVQKQQQELDGSLKKIIQQQKAELANIERECLNNKQQLMRAREAAIWELEERHLQEKHQLLKQQLKDQYFMQRHQLLKRHEKETEQMQRYNQRLIEELKNRQTQERARLPKIQRSEAKTRMAMFKKSLRINSTATPDQDREKIKQFAAQEEKRQKNERMAQHQKHESQMRDLQLQCEANVRELHQLQNEKCHLLVEHETQKLKELDEEHSQELKEWREKLRPRKKTLEEEFARKLQEQEVFFKMTGESECLNPSAQSRISKFYPIPTLHSTGS.

Phosphoserine is present on serine 14. One can recognise a Protein kinase domain in the interval 34–292 (WEIIGELGDG…TSQLLQHPFV (259 aa)). ATP is bound by residues 40–48 (LGDGAFGKV) and lysine 63. The Proton acceptor role is filled by aspartate 155. Threonine 183 carries the phosphothreonine modification. Position 189 is a phosphoserine (serine 189). Residues 309–351 (AEVTEEVEDGKEEDEEEEAENALPIPANKRASSDLSIASSEED) are disordered. Positions 312 to 328 (TEEVEDGKEEDEEEEAE) are enriched in acidic residues. Phosphoserine is present on residues serine 340, serine 341, serine 344, serine 347, serine 348, serine 354, and serine 372. Residues 363 to 399 (VSERTEQSTSEDKFSNKILNEKPTTDGPEKAVDEHAS) are compositionally biased toward basic and acidic residues. 4 disordered regions span residues 363 to 453 (VSER…ENNR), 498 to 650 (VSQE…SIEE), 663 to 761 (ALGS…SGDL), and 772 to 791 (AKDS…KTLK). Over residues 432–441 (PDTQDQQTVD) the composition is skewed to polar residues. Residues 518-529 (LTKEETQEKLGK) show a composition bias toward basic and acidic residues. Phosphoserine is present on residues serine 543, serine 561, and serine 566. Residues 598–607 (GGERVEDKQP) are compositionally biased toward basic and acidic residues. Residues 619-630 (QLTSTSETTRAT) show a composition bias toward polar residues. Residues serine 643, serine 647, and serine 666 each carry the phosphoserine modification. Residues 690-701 (AESQAPAASQPS) are compositionally biased toward low complexity. Residues 746–761 (TDSGTGSTVENSSGDL) are compositionally biased toward polar residues. A phosphoserine mark is found at serine 775 and serine 777. Threonine 812 is subject to Phosphothreonine. Phosphoserine is present on serine 816. Residues 824–1067 (LRRQELRELR…LKNRQTQERA (244 aa)) adopt a coiled-coil conformation. The 36-residue stretch at 873–908 (DQEIENLEKQQKQTIERLEQEHTNRLRDEAKRIKGE) folds into the UVR domain. Residues 944-963 (KRRKEELAQSQHAQEQEFVQ) are disordered. The segment covering 954-963 (QHAQEQEFVQ) has biased composition (low complexity). At threonine 1095 the chain carries Phosphothreonine. The stretch at 1107-1181 (AAQEEKRQKN…ELKEWREKLR (75 aa)) forms a coiled coil. The tract at residues 1109–1129 (QEEKRQKNERMAQHQKHESQM) is disordered.

It belongs to the protein kinase superfamily. STE Ser/Thr protein kinase family. STE20 subfamily. In terms of processing, proteolytically cleaved by caspase-3. Autophosphorylated. As to expression, ubiquitously expressed.

It localises to the cytoplasm. It carries out the reaction L-seryl-[protein] + ATP = O-phospho-L-seryl-[protein] + ADP + H(+). The enzyme catalyses L-threonyl-[protein] + ATP = O-phospho-L-threonyl-[protein] + ADP + H(+). Its function is as follows. Mediates apoptosis and actin stress fiber dissolution. In Mus musculus (Mouse), this protein is STE20-like serine/threonine-protein kinase (Slk).